We begin with the raw amino-acid sequence, 75 residues long: Small ribosomal subunit protein bS16 (75 aa).

The protein belongs to the bacterial ribosomal protein bS16 family.

This chain is Small ribosomal subunit protein bS16, found in Campylobacter hominis (strain ATCC BAA-381 / DSM 21671 / CCUG 45161 / LMG 19568 / NCTC 13146 / CH001A).